A 207-amino-acid polypeptide reads, in one-letter code: Large ribosomal subunit protein bL25 (207 aa).

The disordered stretch occupies residues Asp185–Ser207.

This sequence belongs to the bacterial ribosomal protein bL25 family. CTC subfamily. In terms of assembly, part of the 50S ribosomal subunit; part of the 5S rRNA/L5/L18/L25 subcomplex. Contacts the 5S rRNA. Binds to the 5S rRNA independently of L5 and L18.

This is one of the proteins that binds to the 5S RNA in the ribosome where it forms part of the central protuberance. The chain is Large ribosomal subunit protein bL25 from Rhodococcus jostii (strain RHA1).